Consider the following 68-residue polypeptide: MPKLKTKSAVKKRFKLTASGKVVASQAGKKHFMRRRTKAQIRNLRGTTILCDQDGYNIKKYFLPYGTN.

The protein belongs to the bacterial ribosomal protein bL35 family.

The chain is Large ribosomal subunit protein bL35 from Rickettsia bellii (strain RML369-C).